The sequence spans 236 residues: Small ribosomal subunit protein uS2 (236 aa).

Belongs to the universal ribosomal protein uS2 family.

This chain is Small ribosomal subunit protein uS2, found in Brevibacillus brevis (strain 47 / JCM 6285 / NBRC 100599).